A 660-amino-acid polypeptide reads, in one-letter code: Probable cation-transporting P-type ATPase J (660 aa).

A run of 5 helical transmembrane segments spans residues tryptophan 33–proline 53, leucine 60–leucine 80, alanine 94–phenylalanine 114, isoleucine 261–leucine 281, and methionine 292–isoleucine 312. Aspartate 340 functions as the 4-aspartylphosphate intermediate in the catalytic mechanism. Residues aspartate 544 and aspartate 548 each coordinate Mg(2+). Residues isoleucine 598 to leucine 618 form a helical membrane-spanning segment.

It belongs to the cation transport ATPase (P-type) (TC 3.A.3) family. Type IB subfamily.

The protein localises to the cell membrane. It carries out the reaction ATP + H2O = ADP + phosphate + H(+). The polypeptide is Probable cation-transporting P-type ATPase J (ctpJ) (Mycobacterium tuberculosis (strain CDC 1551 / Oshkosh)).